Here is a 425-residue protein sequence, read N- to C-terminus: UDP-N-acetylglucosamine 1-carboxyvinyltransferase (425 aa).

22–23 (KN) contacts phosphoenolpyruvate. Arg93 lines the UDP-N-acetyl-alpha-D-glucosamine pocket. Cys117 (proton donor) is an active-site residue. Cys117 bears the 2-(S-cysteinyl)pyruvic acid O-phosphothioketal mark. UDP-N-acetyl-alpha-D-glucosamine is bound by residues 122–126 (RPVDL), 162–165 (KVSV), Asp307, and Ile329.

Belongs to the EPSP synthase family. MurA subfamily.

Its subcellular location is the cytoplasm. The enzyme catalyses phosphoenolpyruvate + UDP-N-acetyl-alpha-D-glucosamine = UDP-N-acetyl-3-O-(1-carboxyvinyl)-alpha-D-glucosamine + phosphate. The protein operates within cell wall biogenesis; peptidoglycan biosynthesis. Its function is as follows. Cell wall formation. Adds enolpyruvyl to UDP-N-acetylglucosamine. This chain is UDP-N-acetylglucosamine 1-carboxyvinyltransferase, found in Pasteurella multocida (strain Pm70).